The sequence spans 388 residues: 2-Hydroxyacid oxidase (388 aa).

The interval 1–21 is disordered; that stretch reads MENQFKNNNNSSSIETSNQFS. In terms of domain architecture, FMN hydroxy acid dehydrogenase spans 26–384; sequence NRLDSFVSVS…NNSIIWDQNK (359 aa). Residue tyrosine 52 coordinates glyoxylate. FMN-binding positions include 105 to 107, serine 134, 156 to 158, and threonine 184; these read PWA and QLY. A glyoxylate-binding site is contributed by tyrosine 158. Arginine 193 is a binding site for glyoxylate. 2 residues coordinate FMN: lysine 255 and serine 277. Glyoxylate is bound by residues histidine 279 and arginine 282. Histidine 279 acts as the Proton acceptor in catalysis. Residues 310–314 and 333–334 contribute to the FMN site; these read DGGIR and GR.

The protein belongs to the FMN-dependent alpha-hydroxy acid dehydrogenase family. Homotetramer. FMN is required as a cofactor.

The catalysed reaction is glycolate + O2 = glyoxylate + H2O2. It carries out the reaction a (2S)-2-hydroxycarboxylate + O2 = a 2-oxocarboxylate + H2O2. Catalyzes the oxidation of glycolate to glyoxylate, with a reduction of O2 to H2O2. May use other 2-hydroxyacids as substrates. This Dictyostelium discoideum (Social amoeba) protein is 2-Hydroxyacid oxidase (haox).